The primary structure comprises 90 residues: Albumin (90 aa).

Serine 5 carries the phosphoserine modification. Ca(2+) is bound by residues glutamate 6 and aspartate 13. One can recognise an Albumin domain in the interval 25 to 90 (LLRHLVDEPQ…LVASTQAALA (66 aa)). At serine 61 the chain carries Phosphoserine. Phosphothreonine occurs at positions 62 and 64. Lysine 80 carries the post-translational modification N6-methyllysine.

It belongs to the ALB/AFP/VDB family. In terms of assembly, interacts with FCGRT; this interaction regulates ALB homeostasis. Interacts with TASOR. In plasma, occurs in a covalently-linked complex with chromophore-bound alpha-1-microglobulin; this interaction does not prevent fatty acid binding to ALB. As to expression, plasma.

The protein resides in the secreted. Functionally, binds water, Ca(2+), Na(+), K(+), fatty acids, hormones, bilirubin and drugs. Its main function is the regulation of the colloidal osmotic pressure of blood. Major zinc transporter in plasma, typically binds about 80% of all plasma zinc. Major calcium and magnesium transporter in plasma, binds approximately 45% of circulating calcium and magnesium in plasma. Potentially has more than two calcium-binding sites and might additionally bind calcium in a non-specific manner. The shared binding site between zinc and calcium suggests a crosstalk between zinc and calcium transport in the blood. The rank order of affinity is zinc &gt; calcium &gt; magnesium. Binds to the bacterial siderophore enterobactin and inhibits enterobactin-mediated iron uptake of E.coli from ferric transferrin, and may thereby limit the utilization of iron and growth of enteric bacteria such as E.coli. Does not prevent iron uptake by the bacterial siderophore aerobactin. This is Albumin from Capra hircus (Goat).